We begin with the raw amino-acid sequence, 629 residues long: MDYHGGTYDVIVVGAGHAGCEAALASARIGAKTLVITLNLDMIAFMPCNPSIGGPAKGIVVREIDALGGEMAKNIDKTYIQMRMLNTGKGPAVRALRAQADKVLYQREMKKTLENQENLTLLQGKVERLIVEDGVCKGVITHTGAHYYAKAVVITTGTFLRGEIIIGDIKYSSGPNNQQPSIKLSEHLEELGFELVRFKTGTPPRVNSRTIDYSKTEIQPGDKEPRAFSYETTKYITDQLPCWLTYTTEETHRIIDENLHLSPMYSGMIKGTGPRYCPSIEDKVVRFHDKPRHQIFLEPEGRETEEVYVQGLSTSLPEHIQRKLLETIPGLEKAQLMRAGYAIEYDAIVPTQLWPTLETKLVKNLYTAGQINGTSGYEEAAGQGIMAGINAAHRALGREEIILSRSDAYIGVLIDDLVTKGTNEPYRLLTSRAEYRLLLRHDNADLRLTELGYRIGLISEERYQKFLAKKEAIEREKKRLQTVIIKPTPKVQEVIREAGGSELKDGIRAADLLRRPEMTYEHIRKLAPADEEIAPEVAEQVEIQIKYEGYIQKSLQEVERLKKMENKKIPEDIDYDAIQGLATEARQKLKQVRPLSIAQASRISGVNPADISILLVYLEQGRIARVSNE.

FAD is bound by residues glycine 14–glycine 19, valine 126, and serine 181. Residue glycine 273 to phenylalanine 287 coordinates NAD(+). FAD is bound at residue glutamine 370.

Belongs to the MnmG family. Homodimer. Heterotetramer of two MnmE and two MnmG subunits. It depends on FAD as a cofactor.

It is found in the cytoplasm. Its function is as follows. NAD-binding protein involved in the addition of a carboxymethylaminomethyl (cmnm) group at the wobble position (U34) of certain tRNAs, forming tRNA-cmnm(5)s(2)U34. The sequence is that of tRNA uridine 5-carboxymethylaminomethyl modification enzyme MnmG from Geobacillus kaustophilus (strain HTA426).